The chain runs to 522 residues: Tetratricopeptide repeat protein 39C (522 aa).

TPR repeat units lie at residues 254 to 287 (SLFM…AVDQ), 292 to 325 (HVCL…SRWS), and 424 to 457 (GLKH…ESCR).

Belongs to the TTC39 family.

The sequence is that of Tetratricopeptide repeat protein 39C (Ttc39c) from Rattus norvegicus (Rat).